We begin with the raw amino-acid sequence, 577 residues long: Proline--tRNA ligase (577 aa).

It belongs to the class-II aminoacyl-tRNA synthetase family. ProS type 1 subfamily. As to quaternary structure, homodimer.

The protein resides in the cytoplasm. It catalyses the reaction tRNA(Pro) + L-proline + ATP = L-prolyl-tRNA(Pro) + AMP + diphosphate. In terms of biological role, catalyzes the attachment of proline to tRNA(Pro) in a two-step reaction: proline is first activated by ATP to form Pro-AMP and then transferred to the acceptor end of tRNA(Pro). As ProRS can inadvertently accommodate and process non-cognate amino acids such as alanine and cysteine, to avoid such errors it has two additional distinct editing activities against alanine. One activity is designated as 'pretransfer' editing and involves the tRNA(Pro)-independent hydrolysis of activated Ala-AMP. The other activity is designated 'posttransfer' editing and involves deacylation of mischarged Ala-tRNA(Pro). The misacylated Cys-tRNA(Pro) is not edited by ProRS. This chain is Proline--tRNA ligase, found in Chlamydia felis (strain Fe/C-56) (Chlamydophila felis).